We begin with the raw amino-acid sequence, 473 residues long: Response regulator protein FleR (473 aa).

A Response regulatory domain is found at 4–118; sequence KVLLVEDDRA…ALLDLVARHA (115 aa). D53 carries the 4-aspartylphosphate modification. The Sigma-54 factor interaction domain maps to 130–359; sequence PVALEPASRQ…LDNAIQRALI (230 aa). Residues 158–165 and 221–230 each bind ATP; these read GESGTGKE and ADGGTILLDE.

Functionally, member of the two-component regulatory system FleS/FleR that regulates the expression of multiple genes involved in flagellar synthesis, adhesion, swarming, motility and antibiotic resistance. May function as a transcriptional activator by direct binding to a cis-acting sequence upstream of the target genes. The sequence is that of Response regulator protein FleR from Pseudomonas aeruginosa (strain ATCC 15692 / DSM 22644 / CIP 104116 / JCM 14847 / LMG 12228 / 1C / PRS 101 / PAO1).